Reading from the N-terminus, the 445-residue chain is 3-phosphoshikimate 1-carboxyvinyltransferase (445 aa).

3-phosphoshikimate-binding residues include K25, S26, and R30. K25 is a phosphoenolpyruvate binding site. Phosphoenolpyruvate is bound by residues G98 and R126. Residues S171, Q173, D324, and K351 each contribute to the 3-phosphoshikimate site. Position 173 (Q173) interacts with phosphoenolpyruvate. D324 acts as the Proton acceptor in catalysis. Positions 355 and 398 each coordinate phosphoenolpyruvate.

Belongs to the EPSP synthase family. Monomer.

It localises to the cytoplasm. It carries out the reaction 3-phosphoshikimate + phosphoenolpyruvate = 5-O-(1-carboxyvinyl)-3-phosphoshikimate + phosphate. Its pathway is metabolic intermediate biosynthesis; chorismate biosynthesis; chorismate from D-erythrose 4-phosphate and phosphoenolpyruvate: step 6/7. Functionally, catalyzes the transfer of the enolpyruvyl moiety of phosphoenolpyruvate (PEP) to the 5-hydroxyl of shikimate-3-phosphate (S3P) to produce enolpyruvyl shikimate-3-phosphate and inorganic phosphate. This Hydrogenovibrio crunogenus (strain DSM 25203 / XCL-2) (Thiomicrospira crunogena) protein is 3-phosphoshikimate 1-carboxyvinyltransferase.